We begin with the raw amino-acid sequence, 212 residues long: Nuclear phosphoprotein UL3 homolog (212 aa).

Belongs to the alphaherpesvirinae HHV-1 UL3 family. Post-translationally, phosphorylated.

Its subcellular location is the host nucleus. The polypeptide is Nuclear phosphoprotein UL3 homolog (Equus caballus (Horse)).